We begin with the raw amino-acid sequence, 477 residues long: Metallopeptidase AprA (477 aa).

The N-terminal stretch at 1-20 (MSKAKDKAIVSAAQASTAYS) is a signal peptide. Histidine 183 serves as a coordination point for Zn(2+). The active site involves glutamate 184. Zn(2+) contacts are provided by histidine 187 and histidine 193. The Ca(2+) site is built by arginine 264, glycine 266, threonine 268, aspartate 296, glycine 298, glycine 299, aspartate 301, threonine 338, glutamate 340, glycine 345, glycine 347, aspartate 349, asparagine 354, alanine 356, asparagine 358, glycine 362, glycine 363, alanine 364, glycine 365, aspartate 367, glycine 371, alanine 372, glycine 373, glycine 374, aspartate 376, glycine 380, glycine 381, alanine 382, glycine 383, aspartate 385, aspartate 394, aspartate 401, aspartate 411, aspartate 453, serine 455, and aspartate 461. Hemolysin-type calcium-binding repeat units lie at residues 343–360 (FGGA…ANVI), 361–378 (KGGA…ADQL), and 379–391 (WGGA…VFGA).

The protein belongs to the peptidase M10B family. Ca(2+) serves as cofactor. The cofactor is Zn(2+).

It localises to the secreted. Is completely inhibited by the metal cation chelators 1,10-phenanthroline and EDTA, but PMSF, pepstatin A and E-64 have no effect on activity. In terms of biological role, peptidase able to cleave azocasein and the milk substrates beta-casein and Na-caseinate. Can withstand UHT processing of milk, and is able to spoil UHT milk over the storage period. In Pseudomonas marginalis (Pseudomonas panacis), this protein is Metallopeptidase AprA.